We begin with the raw amino-acid sequence, 61 residues long: Small ribosomal subunit protein uS14 (61 aa).

Zn(2+) contacts are provided by Cys24, Cys27, Cys40, and Cys43.

Belongs to the universal ribosomal protein uS14 family. Zinc-binding uS14 subfamily. Part of the 30S ribosomal subunit. Contacts proteins S3 and S10. It depends on Zn(2+) as a cofactor.

Its function is as follows. Binds 16S rRNA, required for the assembly of 30S particles and may also be responsible for determining the conformation of the 16S rRNA at the A site. This is Small ribosomal subunit protein uS14 from Streptococcus equi subsp. zooepidemicus (strain H70).